Here is a 423-residue protein sequence, read N- to C-terminus: Glucose-1-phosphate adenylyltransferase (423 aa).

Residues Y98, G163, 178–179 (EK), and S189 contribute to the alpha-D-glucose 1-phosphate site.

This sequence belongs to the bacterial/plant glucose-1-phosphate adenylyltransferase family. Homotetramer.

It carries out the reaction alpha-D-glucose 1-phosphate + ATP + H(+) = ADP-alpha-D-glucose + diphosphate. It participates in glycan biosynthesis; glycogen biosynthesis. Its function is as follows. Involved in the biosynthesis of ADP-glucose, a building block required for the elongation reactions to produce glycogen. Catalyzes the reaction between ATP and alpha-D-glucose 1-phosphate (G1P) to produce pyrophosphate and ADP-Glc. The polypeptide is Glucose-1-phosphate adenylyltransferase (Thermotoga neapolitana (strain ATCC 49049 / DSM 4359 / NBRC 107923 / NS-E)).